The sequence spans 450 residues: Signal recognition particle protein (450 aa).

GTP contacts are provided by residues 107–114, 190–194, and 248–251; these read GLQGSGKT, DTAGR, and TKTD.

It belongs to the GTP-binding SRP family. SRP54 subfamily. As to quaternary structure, part of the signal recognition particle protein translocation system, which is composed of SRP and FtsY. SRP is a ribonucleoprotein composed of Ffh and a 4.5S RNA molecule.

It is found in the cytoplasm. The enzyme catalyses GTP + H2O = GDP + phosphate + H(+). Functionally, involved in targeting and insertion of nascent membrane proteins into the cytoplasmic membrane. Binds to the hydrophobic signal sequence of the ribosome-nascent chain (RNC) as it emerges from the ribosomes. The SRP-RNC complex is then targeted to the cytoplasmic membrane where it interacts with the SRP receptor FtsY. Interaction with FtsY leads to the transfer of the RNC complex to the Sec translocase for insertion into the membrane, the hydrolysis of GTP by both Ffh and FtsY, and the dissociation of the SRP-FtsY complex into the individual components. The sequence is that of Signal recognition particle protein from Buchnera aphidicola subsp. Baizongia pistaciae (strain Bp).